Here is a 398-residue protein sequence, read N- to C-terminus: S-adenosylmethionine synthase 2 (398 aa).

Histidine 16 provides a ligand contact to ATP. Aspartate 18 is a Mg(2+) binding site. Glutamate 51 provides a ligand contact to K(+). 2 residues coordinate L-methionine: glutamate 64 and glutamine 108. The tract at residues glutamine 108–alanine 118 is flexible loop. Residues aspartate 176–lysine 178, lysine 242–phenylalanine 243, aspartate 251, arginine 257–lysine 258, alanine 274, and lysine 278 each bind ATP. Aspartate 251 provides a ligand contact to L-methionine. Lysine 282 lines the L-methionine pocket.

Belongs to the AdoMet synthase family. As to quaternary structure, homotetramer; dimer of dimers. Mg(2+) serves as cofactor. It depends on K(+) as a cofactor.

The protein localises to the cytoplasm. The enzyme catalyses L-methionine + ATP + H2O = S-adenosyl-L-methionine + phosphate + diphosphate. The protein operates within amino-acid biosynthesis; S-adenosyl-L-methionine biosynthesis; S-adenosyl-L-methionine from L-methionine: step 1/1. Its function is as follows. Catalyzes the formation of S-adenosylmethionine (AdoMet) from methionine and ATP. The overall synthetic reaction is composed of two sequential steps, AdoMet formation and the subsequent tripolyphosphate hydrolysis which occurs prior to release of AdoMet from the enzyme. In Rhodopseudomonas palustris (strain BisB18), this protein is S-adenosylmethionine synthase 2.